Reading from the N-terminus, the 464-residue chain is Dihydrolipoyl dehydrogenase (464 aa).

Residues 33-41 (EPKYWGGVC), Lys50, and Gly113 each bind FAD. A disulfide bond links Cys41 and Cys46. Residues 178 to 182 (GAGAI), Glu201, and 266 to 269 (AIGF) each bind NAD(+). Residues Asp309 and Ala317 each coordinate FAD. His443 serves as the catalytic Proton acceptor.

Belongs to the class-I pyridine nucleotide-disulfide oxidoreductase family. In terms of assembly, homodimer. Part of the PDH complex, consisting of multiple copies of AceE (E1), DlaT (E2) and Lpd (E3), and of the BCKADH complex, consisting of multiple copies of BkdA/BkdB (E1), BkdC (E2) and Lpd (E3). The cofactor is FAD.

The protein localises to the cytoplasm. The catalysed reaction is N(6)-[(R)-dihydrolipoyl]-L-lysyl-[protein] + NAD(+) = N(6)-[(R)-lipoyl]-L-lysyl-[protein] + NADH + H(+). In terms of biological role, lipoamide dehydrogenase is a component of the alpha-ketoacid dehydrogenase complexes. Catalyzes the reoxidation of dihydrolipoyl groups which are covalently attached to the lipoate acyltransferase components (E2) of the complexes. In Mycobacterium bovis (strain ATCC BAA-935 / AF2122/97), this protein is Dihydrolipoyl dehydrogenase (lpd).